Reading from the N-terminus, the 898-residue chain is Cilium assembly protein DZIP1 (898 aa).

A disordered region spans residues 14–66; the sequence is DPPGTHSSAGIPSLLSSPQSQPSSGSQSRPAPSTMSGPLTSSGASTSIPPPFK. A compositionally biased stretch (low complexity) spans 25–46; it reads PSLLSSPQSQPSSGSQSRPAPS. A compositionally biased stretch (polar residues) spans 47–60; the sequence is TMSGPLTSSGASTS. Positions 145–197 form a coiled coil; it reads LSISLQAAEERLLAEAREREQICVQLQKKTQDAKALKEELKQRKKIIASQQAM. The C2H2-type zinc finger occupies 207-230; that stretch reads HKCQHCEKAFMNASFLQSHMQRRH. 2 coiled-coil regions span residues 242-353 and 407-447; these read NQKK…VQTQ and SAVS…ISSK. Positions 435-463 are enriched in polar residues; sequence TSQNKQMKQISSKPPTITVQREGVSTPSP. 3 disordered regions span residues 435 to 509, 585 to 739, and 773 to 878; these read TSQN…SWQK, EQRV…WTDG, and KSLE…DAGT. Residues 495–505 are compositionally biased toward low complexity; the sequence is SSISESPTENR. The stretch at 573–590 forms a coiled coil; sequence YRRALKEISHKLEQRVKE. Positions 605–652 are enriched in polar residues; that stretch reads VVQSRPRSSSFPSTVTRVMSGPASKQQRTPQPVPRSRTNVPHKTSTPL. Residues 662 to 684 show a composition bias toward acidic residues; sequence SDEDSSEEEEEEEEEEESSDEES. Polar residues-rich tracts occupy residues 685–715 and 723–734; these read PQMQKKTVLVNSSTAKAQNTAKTQSTAQSVR and AEPTNVTTLSDS. Residues 797 to 815 show a composition bias toward basic and acidic residues; it reads KPTDVRNTRQNAKKELKYS. The segment covering 816 to 826 has biased composition (acidic residues); the sequence is DDDDDDDDDWD. Positions 855 to 866 are enriched in polar residues; the sequence is DTSTSVWGSSTG.

This sequence belongs to the DZIP C2H2-type zinc-finger protein family. Expressed throughout the embryo starting at 12 hours.

The protein resides in the cell projection. The protein localises to the cilium. Its subcellular location is the cytoplasm. It localises to the cytoskeleton. It is found in the cilium basal body. The protein resides in the microtubule organizing center. The protein localises to the centrosome. Its subcellular location is the centriole. It localises to the nucleus. Functionally, molecular adapter that recruits protein complexes required for cilium assembly and function to the cilium basal body. Required for establishment of left-right asymmetry during embryogenesis. Acts as a permissive factor that is required for the proper regulation of Hedgehog (Hh) target genes in response to Hh signals. Acts downstream of the Smoothened protein to modulate Gli activity in the somites of the developing embryo. The sequence is that of Cilium assembly protein DZIP1 (dzip1) from Danio rerio (Zebrafish).